A 431-amino-acid chain; its full sequence is E3 ubiquitin-protein ligase RNF128 (431 aa).

The N-terminal stretch at 1–38 (MGQLPGAGVFCRGGCGFSRLLAWCFLLVLSPQTPGSRG) is a signal peptide. Residues N48, N59, and N101 are each glycosylated (N-linked (GlcNAc...) asparagine). A PA domain is found at 75-186 (SPLEPVAGVL…LKGTKILQSI (112 aa)). The chain crosses the membrane as a helical span at residues 211–231 (IFFVSVSFFIITAATVGYFIF). Residues 280 to 321 (CAVCIELYKPNDLVRILTCNHVFHKTCVDPWLLEHRTCPMCK) form an RING-type; atypical zinc finger. Residues 345–354 (VSNETSSNAS) are compositionally biased toward polar residues. Residues 345 to 431 (VSNETSSNAS…QETTVREIKS (87 aa)) form a disordered region.

In terms of processing, auto-ubiquitinated. Controls the development of T-cell clonal anergy by ubiquitination.

The protein resides in the cytoplasm. It localises to the endomembrane system. Its subcellular location is the cytoskeleton. It is found in the perinuclear region. The enzyme catalyses S-ubiquitinyl-[E2 ubiquitin-conjugating enzyme]-L-cysteine + [acceptor protein]-L-lysine = [E2 ubiquitin-conjugating enzyme]-L-cysteine + N(6)-ubiquitinyl-[acceptor protein]-L-lysine.. The protein operates within protein modification; protein ubiquitination. In terms of biological role, E3 ubiquitin-protein ligase that catalyzes 'Lys-27', 'Lys-48'- or 'Lys-63'-linked polyubiquitin chains formation and plays a role in different biological processes such as modulation of immune response, cytoskeletal dynamics or protein homeostasis. Inhibits IL2 and IL4 transcription, thereby playing an important role in the induction of the anergic phenotype, a long-term stable state of T-lymphocyte unresponsiveness to antigenic stimulation associated with the blockade of interleukin production. Ubiquitinates ARPC5 with 'Lys-48' linkages and COR1A with 'Lys-63' linkages leading to their degradation, down-regulation of these cytoskeletal components results in impaired lamellipodium formation and reduced accumulation of F-actin at the immunological synapse. Functions in the patterning of the dorsal ectoderm; sensitizes ectoderm to respond to neural-inducing signals. Plays a positive role in innate immune response by promoting 'Lys-63'-linked ubiquitination of TBK1 after RNA- or DNA-virus infection. Regulates alveolar macrophage activation and neutrophil infiltration by interacting with TLR4, targeting it for degradation, and inhibiting NF-kappa-B activation, hence decreasing pro-inflammatory cytokines. Negatively regulates the IL-3/STAT5 signaling pathway by facilitating 'Lys-27'-linked polyubiquitination of IL3RA leading to its degradation via lysosomal pathway. Directly regulates the N-glycosylation process in the endoplasmic reticulum by targeting the glycosyl-transferase RPN1 for ubiquitination and degradation. Other substrates targeted for degradation by RNF128 include transmembrane proteins CD40L, CD83 or the tetraspanin CD151. This Bos taurus (Bovine) protein is E3 ubiquitin-protein ligase RNF128 (RNF128).